Reading from the N-terminus, the 564-residue chain is Eukaryotic translation initiation factor 3 subunit L (564 aa).

The region spanning 331–537 (DAIRVFANIL…IHIADTKVAR (207 aa)) is the PCI domain.

The protein belongs to the eIF-3 subunit L family. In terms of assembly, component of the eukaryotic translation initiation factor 3 (eIF-3) complex, which is composed of 13 subunits: EIF3A, EIF3B, EIF3C, EIF3D, EIF3E, EIF3F, EIF3G, EIF3H, EIF3I, EIF3J, EIF3K, EIF3L and EIF3M.

It is found in the cytoplasm. Functionally, component of the eukaryotic translation initiation factor 3 (eIF-3) complex, which is involved in protein synthesis of a specialized repertoire of mRNAs and, together with other initiation factors, stimulates binding of mRNA and methionyl-tRNAi to the 40S ribosome. The eIF-3 complex specifically targets and initiates translation of a subset of mRNAs involved in cell proliferation. This Gallus gallus (Chicken) protein is Eukaryotic translation initiation factor 3 subunit L.